Here is a 225-residue protein sequence, read N- to C-terminus: Ribosomal RNA small subunit methyltransferase G (225 aa).

Residues G96, F101, 146–147 (AE), and R160 each bind S-adenosyl-L-methionine.

This sequence belongs to the methyltransferase superfamily. RNA methyltransferase RsmG family.

It localises to the cytoplasm. In terms of biological role, specifically methylates the N7 position of a guanine in 16S rRNA. This chain is Ribosomal RNA small subunit methyltransferase G, found in Mycoplasma mobile (strain ATCC 43663 / 163K / NCTC 11711) (Mesomycoplasma mobile).